The chain runs to 147 residues: uncharacterized protein (147 aa).

This is an uncharacterized protein from Acidianus filamentous virus 2 (isolate Italy/Pozzuoli) (AFV-2).